The chain runs to 353 residues: Forkhead box protein I3-A (353 aa).

A DNA-binding region (fork-head) is located at residues 116 to 210 (RPPYSYSALI…DNGNFRRKRK (95 aa)). The segment at 201–255 (DNGNFRRKRKRKSDSLAEEEGKGYSGSDSALSSPKNPSDSSERGNSPISTDQAPC) is disordered. The Nuclear localization signal motif lies at 206-212 (RRKRKRK). Basic and acidic residues predominate over residues 213-222 (SDSLAEEEGK). A compositionally biased stretch (polar residues) spans 226 to 252 (GSDSALSSPKNPSDSSERGNSPISTDQ).

In terms of tissue distribution, expressed in ionocyte precursors.

The protein resides in the nucleus. Functionally, transcription factor required for epithelial cell differentiation. Involved in specification of skin ionocytes from epidermal precursors. This Danio rerio (Zebrafish) protein is Forkhead box protein I3-A.